The primary structure comprises 295 residues: MSGALDVLQMKEEDVLKFLAAGTHLGGTNLDFQMEQYIYKRKSDGIYIINLKRTWEKLLLAARAIVAIENPADVSVISSRNTGQRAVLKFAAATGATPIAGRFTPGTFTNQIQAAFREPRLLVVTDPRADHQPLTEASYVNLPTIALCNTDSPLRYVDIAIPCNNKGAHSVGLMWWMLAREVLRMRGTISREHPWEVMPDLYFYRDPEEIEKEEQAAAEKAVTKEEFQGEWTAPAPEFTATQPEVADWSEGVQVPSVPIQQFPTEDWSAQPATEDWSAAPTAQATEWVGTTTEWS.

Ser2 is modified (N-acetylserine). Ser43 bears the Phosphoserine mark. At Lys52 the chain carries N6-acetyllysine. The segment at 54–113 (TWEKLLLAARAIVAIENPADVSVISSRNTGQRAVLKFAAATGATPIAGRFTPGTFTNQIQ) is interaction with PPP1R16B. Lys89 is subject to N6-acetyllysine; alternate. Lys89 is covalently cross-linked (Glycyl lysine isopeptide (Lys-Gly) (interchain with G-Cter in SUMO2); alternate). The residue at position 97 (Thr97) is a Phosphothreonine. Laminin-binding stretches follow at residues 161 to 180 (IPCN…MLAR) and 205 to 229 (RDPE…EFQG). [DE]-W-[ST] repeat units lie at residues 230 to 232 (EWT), 247 to 249 (DWS), 266 to 268 (DWS), 275 to 277 (DWS), and 293 to 295 (EWS). Residues 242 to 295 (QPEVADWSEGVQVPSVPIQQFPTEDWSAQPATEDWSAAPTAQATEWVGTTTEWS) form a laminin-binding region. The segment at 266-295 (DWSAQPATEDWSAAPTAQATEWVGTTTEWS) is disordered. Positions 280 to 295 (PTAQATEWVGTTTEWS) are enriched in polar residues.

Belongs to the universal ribosomal protein uS2 family. In terms of assembly, monomer (37LRP) and homodimer (67LR). Component of the small ribosomal subunit. Mature ribosomes consist of a small (40S) and a large (60S) subunit. The 40S subunit contains about 33 different proteins and 1 molecule of RNA (18S). The 60S subunit contains about 49 different proteins and 3 molecules of RNA (28S, 5.8S and 5S). Interacts with RPS21. Interacts with several laminins including at least LAMB1. Interacts with MDK. The mature dimeric form interacts with PPP1R16B (via its fourth ankyrin repeat). Interacts with PPP1CA only in the presence of PPP1R16B. Acylated. Acylation may be a prerequisite for conversion of the monomeric 37 kDa laminin receptor precursor (37LRP) to the mature dimeric 67 kDa laminin receptor (67LR), and may provide a mechanism for membrane association. Post-translationally, cleaved by stromelysin-3 (ST3) at the cell surface. Cleavage by stromelysin-3 may be a mechanism to alter cell-extracellular matrix interactions.

The protein localises to the cell membrane. It is found in the cytoplasm. It localises to the nucleus. Its function is as follows. Required for the assembly and/or stability of the 40S ribosomal subunit. Required for the processing of the 20S rRNA-precursor to mature 18S rRNA in a late step of the maturation of 40S ribosomal subunits. Also functions as a cell surface receptor for laminin. Plays a role in cell adhesion to the basement membrane and in the consequent activation of signaling transduction pathways. May play a role in cell fate determination and tissue morphogenesis. Also acts as a receptor for several other ligands, including the pathogenic prion protein, viruses, and bacteria. Acts as a PPP1R16B-dependent substrate of PPP1CA. This chain is Small ribosomal subunit protein uS2, found in Oryctolagus cuniculus (Rabbit).